The chain runs to 177 residues: ATP synthase subunit delta (177 aa).

Belongs to the ATPase delta chain family. As to quaternary structure, F-type ATPases have 2 components, F(1) - the catalytic core - and F(0) - the membrane proton channel. F(1) has five subunits: alpha(3), beta(3), gamma(1), delta(1), epsilon(1). F(0) has three main subunits: a(1), b(2) and c(10-14). The alpha and beta chains form an alternating ring which encloses part of the gamma chain. F(1) is attached to F(0) by a central stalk formed by the gamma and epsilon chains, while a peripheral stalk is formed by the delta and b chains.

It is found in the cell inner membrane. F(1)F(0) ATP synthase produces ATP from ADP in the presence of a proton or sodium gradient. F-type ATPases consist of two structural domains, F(1) containing the extramembraneous catalytic core and F(0) containing the membrane proton channel, linked together by a central stalk and a peripheral stalk. During catalysis, ATP synthesis in the catalytic domain of F(1) is coupled via a rotary mechanism of the central stalk subunits to proton translocation. Functionally, this protein is part of the stalk that links CF(0) to CF(1). It either transmits conformational changes from CF(0) to CF(1) or is implicated in proton conduction. This chain is ATP synthase subunit delta, found in Vibrio vulnificus (strain CMCP6).